Consider the following 308-residue polypeptide: Phosphoribosylaminoimidazole-succinocarboxamide synthase (308 aa).

Belongs to the SAICAR synthetase family.

It catalyses the reaction 5-amino-1-(5-phospho-D-ribosyl)imidazole-4-carboxylate + L-aspartate + ATP = (2S)-2-[5-amino-1-(5-phospho-beta-D-ribosyl)imidazole-4-carboxamido]succinate + ADP + phosphate + 2 H(+). Its pathway is purine metabolism; IMP biosynthesis via de novo pathway; 5-amino-1-(5-phospho-D-ribosyl)imidazole-4-carboxamide from 5-amino-1-(5-phospho-D-ribosyl)imidazole-4-carboxylate: step 1/2. In Xanthomonas oryzae pv. oryzae (strain PXO99A), this protein is Phosphoribosylaminoimidazole-succinocarboxamide synthase.